The chain runs to 2159 residues: MALGTQLMLLLWKNYTYRRRQPIQLLVELLWPLFLFFILVAVRHSHPPLEHHECHFPNKPLPSAGTVPWLQGLVCNVNNSCFQHPTPGEKPGVLSNFKDSLISRLLADTRTVLGGHSIQDMLDALGKLIPVLRAVGGGARPQESDQPTSQGSVTKLLEKILQRASLDPVLGQAQDSMRKFSDAIRDLAQELLTLPSLMELRALLRRPRGSAGSLELVSEALCSTKGPSSPGGLSLNWYEANQLNEFMGPEVAPALPDNSLSPACSEFVGTLDDHPVSRLLWRRLKPLILGKILFAPDTNFTRKLMAQVNQTFEELALLRDLHELWGVLGPQIFNFMNDSTNVAMLQRLLDVGGTGQRQQTPRAQKKLEAIKDFLDPSRGGYSWREAHADMGRLAGILGQMMECVSLDKLEAVPSEEALVSRALELLGERRLWAGIVFLSPEHPLDPSELSSPALSPGHLRFKIRMDIDDVTRTNKIRDKFWDPGPSADPFMDLRYVWGGFVYLQDLLEQAAVRVLGGGNSRTGLYLQQMPHPCYVDDVFLRVLSRSLPLFLTLAWIYSVALTVKAVVREKETRLRETMRAMGLSRAVLWLGWFLSCLGPFLVSAALLVLVLKLGNILPYSHPVVIFLFLAAFAVATVAQSFLLSAFFSRANLAAACGGLAYFALYLPYVLCVAWRERLHLGGLLAASLLSPVAFGFGCESLALLEEQGDGAQWHNLGTGPAEDVFSLAQVSAFLLLDAVIYGLALWYLEAVCPGQYGIPEPWNFPFRRSYWCGPGPPKSSVLAPAPQDPKVLVEEPPLGLVPGVSIRGLKKHFRGCPQPALQGLNLDFYEGHITAFLGHNGAGKTTTLSILSGLFPPSSGSASILGHDVQTNMAAIRPHLGICPQYNVLFDMLTVEEHVWFYGRLKGVSAAAMGPERERLIRDVGLTLKRDTQTRHLSGGMQRKLSVAIAFVGGSRVVIMDEPTAGVDPASRRGIWELLLKYREGRTLILSTHHLDEAELLGDRVAMVAGGSLCCCGSPLFLRRHLGCGYYLTLVKSSQSLVTHDAKGDSEDPRREKKSDGNGRTSDTAFTRGTSDKSNQAPAPGAVPITPSTARILELVQQHVPGAQLVEDLPHELLLVLPYAGALDGSFAMVFQELDQQLELLGLTGYGISDTNLEEIFLKVVEDAHREGGDSRPQLHLRTCTPQPPTGPEASVLENGELAPQGLAPNAAQVQGWTLTCQQLRALLHKRFLLARRSRRGLFAQVVLPALFVGLALFFSLIVPPFGQYPPLQLSPAMYGPQVSFFSEDAPGDPNRMKLLEALLGEAGLQEPSMQDKDARGSECTHSLACYFTVPEVPPDVASILASGNWTPESPSPACQCSQPGARRLLPDCPAGAGGPPPPQAVAGLGEVVQNLTGRNVSDFLVKTYPSLVRRGLKTKKWVDEVRYGGFSLGGRDPDLPTGHEVVRTLAEIRALLSPQPGNALDRILNNLTQWALGLDARNSLKIWFNNKGWHAMVAFVNRANNGLLHALLPSGPVRHAHSITTLNHPLNLTKEQLSEATLIASSVDVLVSICVVFAMSFVPASFTLVLIEERITRAKHLQLVSGLPQTLYWLGNFLWDMCNYLVAVCIVVFIFLAFQQRAYVAPENLPALLLLLLLYGWSITPLMYPASFFFSVPSTAYVVLTCINLFIGINSSMATFVLELLSDQNLQEVSRILKQVFLIFPHFCLGRGLIDMVRNQAMADAFERLGDKQFQSPLRWDIIGKNLLAMMAQGPLFLLITLLLQHRNRLLPQSKPRLLPPLGEEDEDVAQERERVTKGATQGDVLVLRDLTKVYRGQRNPAVDRLCLGIPPGECFGLLGVNGAGKTSTFRMVTGDTLPSSGEAVLAGHNVAQERSAAHRSMGYCPQSDAIFDLLTGREHLELFARLRGVPEAQVAQTALSGLVRLGLPSYADRPAGTYSGGNKRKLATALALVGDPAVVFLDEPTTGMDPSARRFLWNSLLSVVREGRSVVLTSHSMEECEALCTRLAIMVNGRFRCLGSSQHLKGRFGAGHTLTLRVPPDQPEPAIAFIRITFPGAELREVHGSRLRFQLPPGGRCTLTRVFRELAAQGRAHGVEDFSVSQTTLEEVFLYFSKDQGEEEESSRQEAEEEEVSKPGRQHPKRVSRFLEDPSSVETMI.

Residues 22–42 (PIQLLVELLWPLFLFFILVAV) form a helical membrane-spanning segment. The Extracellular segment spans residues 43–546 (RHSHPPLEHH…DVFLRVLSRS (504 aa)). An intrachain disulfide couples cysteine 75 to cysteine 222. Residue asparagine 309 is glycosylated (N-linked (GlcNAc...) asparagine). The next 6 membrane-spanning stretches (helical) occupy residues 547 to 567 (LPLF…KAVV), 590 to 610 (LGWF…LVLV), 623 to 643 (VVIF…SFLL), 652 to 672 (LAAA…VLCV), 678 to 698 (LHLG…GFGC), and 732 to 752 (AFLL…EAVC). The ABC transporter 1 domain maps to 804-1035 (VSIRGLKKHF…LGCGYYLTLV (232 aa)). Position 838-845 (838-845 (GHNGAGKT)) interacts with ATP. Residues 846–866 (TTLSILSGLFPPSSGSASILG) form a helical membrane-spanning segment. Disordered stretches follow at residues 1042-1088 (VTHD…GAVP) and 1172-1192 (GGDS…PTGP). Basic and acidic residues predominate over residues 1044 to 1061 (HDAKGDSEDPRREKKSDG). A compositionally biased stretch (polar residues) spans 1062-1081 (NGRTSDTAFTRGTSDKSNQA). The chain crosses the membrane as a helical span at residues 1246 to 1266 (VVLPALFVGLALFFSLIVPPF). Residues 1267–1551 (GQYPPLQLSP…TLIASSVDVL (285 aa)) lie on the Extracellular side of the membrane. Residues cysteine 1359 and cysteine 1373 are joined by a disulfide bond. 5 helical membrane-spanning segments follow: residues 1552–1572 (VSIC…LVLI), 1598–1618 (FLWD…IFLA), 1635–1655 (LLLL…SFFF), 1663–1683 (VVLT…TFVL), and 1743–1763 (IIGK…LITL). Residues 1807–2039 (LVLRDLTKVY…FGAGHTLTLR (233 aa)) form the ABC transporter 2 domain. 1841 to 1848 (GVNGAGKT) contacts ATP. Positions 2118–2159 (QGEEEESSRQEAEEEEVSKPGRQHPKRVSRFLEDPSSVETMI) are disordered. A compositionally biased stretch (acidic residues) spans 2119-2133 (GEEEESSRQEAEEEE).

This sequence belongs to the ABC transporter superfamily. ABCA family. Post-translationally, N-glycosylated. Widely expressed with higher expression in brain, lung, adrenal gland, spleen and hematopoietic tissues (at protein level). In the brain, expressed in cortex, cerebellum, hippocampus, olfactory bulb, neurons, astrocytes and microglia (at protein level). Also expressed in adipocytes and macrophages (at protein level). Expressed in thymocytes (at protein level). Highly expressed in spleen and hematopoietic tissues. Expressed in brain, lung, macrophages, microglia, oligodendrocytes and neurons.

It localises to the cell membrane. Its subcellular location is the golgi apparatus membrane. The protein resides in the early endosome membrane. The protein localises to the cytoplasm. It is found in the cell projection. It localises to the ruffle membrane. Its subcellular location is the phagocytic cup. Its function is as follows. Probable ATP-binding cassette (ABC) transporter that plays a role in lipid homeostasis and macrophage-mediated phagocytosis. Binds APOA1 and may function in apolipoprotein-mediated phospholipid efflux from cells. May also mediate cholesterol efflux. May regulate cellular ceramide homeostasis during keratinocyte differentiation. Involved in lipid raft organization and CD1D localization on thymocytes and antigen-presenting cells, which plays an important role in natural killer T-cell development and activation. Plays a role in phagocytosis of apoptotic cells by macrophages. Macrophage phagocytosis is stimulated by APOA1 or APOA2, probably by stabilization of ABCA7. Also involved in phagocytic clearance of amyloid-beta by microglia cells and macrophages. Further limits amyloid-beta production by playing a role in the regulation of amyloid-beta A4 precursor protein (APP) endocytosis and/or processing. This chain is ATP-binding cassette sub-family A member 7 (Abca7), found in Mus musculus (Mouse).